The following is a 126-amino-acid chain: Nascent polypeptide-associated complex protein (126 aa).

An NAC-A/B domain is found at 10-77; that stretch reads PRMMKQMQKM…AKKVAKEEEK (68 aa).

This sequence belongs to the NAC-alpha family. As to quaternary structure, homodimer. Interacts with the ribosome. Binds ribosomal RNA.

In terms of biological role, contacts the emerging nascent chain on the ribosome. In Methanococcus maripaludis (strain C7 / ATCC BAA-1331), this protein is Nascent polypeptide-associated complex protein.